The following is a 233-amino-acid chain: Syntaxin-52 (233 aa).

The Cytoplasmic segment spans residues 1-209; sequence MASSSDPWMR…NKSMKSGCSC (209 aa). Residues 137–199 form the t-SNARE coiled-coil homology domain; it reads RQVMREQDEG…RRVQKSLALM (63 aa). The helical; Anchor for type IV membrane protein transmembrane segment at 210 to 230 threads the bilayer; it reads MSMLLSVLGIVGLALVIWLLV. Over 231 to 233 the chain is Vesicular; sequence KYL.

The protein belongs to the syntaxin family. In terms of assembly, interacts either with VTI11 and SYP21, or with VTI11 and SYP22 in the prevacuolar compartment, or with VTI12 and SYP61 in the trans-Golgi network to form t-SNARE complexes. In terms of tissue distribution, expressed in root, leaf, stem, flower and silique.

The protein localises to the golgi apparatus. The protein resides in the trans-Golgi network membrane. It is found in the prevacuolar compartment membrane. Its function is as follows. Vesicle trafficking protein that functions in the secretory pathway. This chain is Syntaxin-52 (SYP52), found in Arabidopsis thaliana (Mouse-ear cress).